Consider the following 617-residue polypeptide: KIF-binding protein (617 aa).

A disordered region spans residues 48–83; that stretch reads ALLGPAPEDEDEPAADDGPGDQALGAGEPREAEGPG. Residues 54 to 66 are compositionally biased toward acidic residues; it reads PEDEDEPAADDGP. The residue at position 174 (serine 174) is a Phosphoserine.

Belongs to the KIF-binding protein family. In terms of assembly, interacts with KIF1B; positively regulates KIF1B microtubule motor activity. Interacts with STMN2. In the embryo it is expressed in cortical neurons; expression increases during neuronal development.

The protein resides in the cytoplasm. Its subcellular location is the cytoskeleton. In terms of biological role, activator of KIF1B plus-end-directed microtubule motor activity. Required for organization of axonal microtubules, and axonal outgrowth and maintenance during peripheral and central nervous system development. The protein is KIF-binding protein of Mus musculus (Mouse).